Here is a 203-residue protein sequence, read N- to C-terminus: Small ribosomal subunit protein uS4 (203 aa).

One can recognise an S4 RNA-binding domain in the interval 93 to 156; that stretch reads RRLDNVVYRL…LKVPAILEAV (64 aa).

Belongs to the universal ribosomal protein uS4 family. In terms of assembly, part of the 30S ribosomal subunit. Contacts protein S5. The interaction surface between S4 and S5 is involved in control of translational fidelity.

One of the primary rRNA binding proteins, it binds directly to 16S rRNA where it nucleates assembly of the body of the 30S subunit. Its function is as follows. With S5 and S12 plays an important role in translational accuracy. The polypeptide is Small ribosomal subunit protein uS4 (Streptococcus gordonii (strain Challis / ATCC 35105 / BCRC 15272 / CH1 / DL1 / V288)).